The chain runs to 330 residues: uncharacterized protein (330 aa).

The helical transmembrane segment at 2-22 threads the bilayer; that stretch reads IKPIYLIIIGTVICLVILYYF. N-linked (GlcNAc...) asparagine; by host glycosylation is found at Asn72, Asn94, Asn234, and Asn315.

Its subcellular location is the membrane. This is an uncharacterized protein from Acanthamoeba polyphaga mimivirus (APMV).